Consider the following 38-residue polypeptide: Alpha-conotoxin PeIA (38 aa).

A propeptide spanning residues 1–21 (FDGRNAAANDKASDLVALTVR) is cleaved from the precursor. Disulfide bonds link C23/C29 and C24/C37. Residues 25 to 27 (SHP) are ser-Xaa-Pro motif, crucial for potent interaction with nAChR. Cysteine amide is present on C37.

It belongs to the conotoxin A superfamily. Post-translationally, the hydroxylation at position Pro-27 is critical, since an hydroxylation at this position decreases potency of the toxin to inhibit both alpha-3-beta-2 (1300-fold) and alpha-6/alpha-3-beta-2-beta-3 (130-fold) nAChRs. A non-modified residue at position Pro-34 is critical, since a hydroxylation at this position decreases potency of the toxin to inhibit alpha-3-beta-2 (1-45-fold) and increases potency to inhibit alpha-6/alpha-3-beta-2-beta-3 (1.77-fold) nAChRs. In terms of tissue distribution, expressed by the venom duct.

The protein localises to the secreted. Its function is as follows. Alpha-conotoxins act on postsynaptic membranes, they bind to the nicotinic acetylcholine receptors (nAChR) and thus inhibit them. This synthetic peptide potently and reversibly blocks alpha-9-alpha-10/CHRNA9-CHRNA10 nAChR (IC(50)=6.9-54.9 nM), alpha-3-beta-2/CHRNA3-CHRNB2 (IC(50)=9.7-97.5 nM) and alpha-6/alpha-3-beta-2-beta-3 (CHRNA6/CHRNA3-CHRNB2-CHRNB3) (IC(50)=11.1-17.2 nM). It also inhibits alpha-6/alpha-3-beta-4 (CHRNA6/CHRNA3-CHRNB4) nAChR with a higher potency on human (IC(50)=6.75 nM) than on rat receptors (IC(50)=130-147 nM). Also shows a weak ability to inhibit alpha-3-beta-4/CHRNA3-CHRNB4 (IC(50)=480-1500 nM). This synthetic toxin also inhibits N-type calcium channels (Ca2.2/CACNA1B) (IC(50)=1.1 nM) via the activation of the G protein-coupled GABA(B) receptor in DRG neurons. Also exhibits inhibition of D.melanogaster alpha-7/CHRNA7 nAChRs. This is Alpha-conotoxin PeIA from Conus pergrandis (Grand cone).